Here is a 326-residue protein sequence, read N- to C-terminus: Vitamin B12 import system permease protein BtuC (326 aa).

Helical transmembrane passes span tryptophan 15–glutamate 35, leucine 61–phenylalanine 81, proline 88–glycine 108, leucine 112–leucine 132, leucine 146–phenylalanine 166, glycine 184–isoleucine 204, glycine 240–isoleucine 260, valine 274–alanine 294, and glutamate 302–leucine 322.

It belongs to the binding-protein-dependent transport system permease family. FecCD subfamily. In terms of assembly, the complex is composed of two ATP-binding proteins (BtuD), two transmembrane proteins (BtuC) and a solute-binding protein (BtuF).

The protein resides in the cell inner membrane. In terms of biological role, part of the ABC transporter complex BtuCDF involved in vitamin B12 import. Involved in the translocation of the substrate across the membrane. The protein is Vitamin B12 import system permease protein BtuC of Salmonella choleraesuis (strain SC-B67).